The primary structure comprises 149 residues: Calmodulin (149 aa).

A2 carries the post-translational modification N-acetylalanine. 4 EF-hand domains span residues 8–43, 44–79, 81–116, and 117–149; these read EQIAEFKEAFSLFDKDGDGTITTKELGTVMRSLGQN, PTEAELQDMINEVDADGNGTIDFPEFLSLMARKMKD, DTEEELIEAFKVFDRDGNGLISAAELRHVMTNLGEK, and LTDEEVDEMIREADIDGDGHINYEEFVRMMMAK. D21, D23, D25, T27, E32, D57, D59, N61, T63, E68, D94, D96, N98, and E105 together coordinate Ca(2+). Residue K116 is modified to N6,N6,N6-trimethyllysine. Ca(2+) contacts are provided by D130, D132, D134, H136, and E141.

This sequence belongs to the calmodulin family.

In terms of biological role, calmodulin mediates the control of a large number of enzymes, ion channels and other proteins by Ca(2+). Among the enzymes to be stimulated by the calmodulin-Ca(2+) complex are a number of protein kinases and phosphatases. This Tetrahymena pyriformis protein is Calmodulin.